Reading from the N-terminus, the 145-residue chain is Selenoprotein M (145 aa).

The first 23 residues, M1–A23, serve as a signal peptide directing secretion. Active-site nucleophile residues include C45 and U48. The cysteinyl-selenocysteine (Cys-Sec) cross-link spans C45–U48. A non-standard amino acid (selenocysteine) is located at residue U48.

Belongs to the selenoprotein M/F family. In terms of tissue distribution, widely expressed.

The protein localises to the cytoplasm. The protein resides in the perinuclear region. It is found in the endoplasmic reticulum. It localises to the golgi apparatus. In terms of biological role, may function as a thiol-disulfide oxidoreductase that participates in disulfide bond formation. This is Selenoprotein M from Homo sapiens (Human).